Consider the following 180-residue polypeptide: Cytokinin-beta-glucosidase (180 aa).

Accumulates in young leaves and shoot tips.

Its function is as follows. Hydrolyzes cytokinin glucosides thus liberating free cytokinins. This Nicotiana tabacum (Common tobacco) protein is Cytokinin-beta-glucosidase (TROLC).